A 132-amino-acid polypeptide reads, in one-letter code: Small ribosomal subunit protein uS8 (132 aa).

The protein belongs to the universal ribosomal protein uS8 family. Part of the 30S ribosomal subunit. Contacts proteins S5 and S12.

In terms of biological role, one of the primary rRNA binding proteins, it binds directly to 16S rRNA central domain where it helps coordinate assembly of the platform of the 30S subunit. The polypeptide is Small ribosomal subunit protein uS8 (Limosilactobacillus reuteri (strain DSM 20016) (Lactobacillus reuteri)).